A 418-amino-acid polypeptide reads, in one-letter code: AP-3 complex subunit mu-1 (418 aa).

An MHD domain is found at 176–417; that stretch reads NNEAYFDVVE…VTKAGKFQVR (242 aa).

The protein belongs to the adaptor complexes medium subunit family. As to quaternary structure, adaptor protein complex 3 (AP-3) is a heterotetramer composed of two large adaptins (delta-type subunit AP3D1 and beta-type subunit AP3B1 or AP3B2), a medium adaptin (mu-type subunit AP3M1 or AP3M2) and a small adaptin (sigma-type subunit APS1 or AP3S2). Interacts with AGAP1. AP-3 associates with the BLOC-1 complex. In terms of assembly, (Microbial infection) Interacts with human respiratory virus (HRSV) matrix protein; this interaction plays an essential role in trafficking the matrix protein in host cells.

Its subcellular location is the golgi apparatus. The protein resides in the cytoplasmic vesicle membrane. Part of the AP-3 complex, an adaptor-related complex which is not clathrin-associated. The complex is associated with the Golgi region as well as more peripheral structures. It facilitates the budding of vesicles from the Golgi membrane and may be directly involved in trafficking to lysosomes. In concert with the BLOC-1 complex, AP-3 is required to target cargos into vesicles assembled at cell bodies for delivery into neurites and nerve terminals. This Homo sapiens (Human) protein is AP-3 complex subunit mu-1 (AP3M1).